The primary structure comprises 88 residues: Large ribosomal subunit protein bL27 (88 aa).

Residues 1-13 (MATKKGASSSSNG) are compositionally biased toward polar residues. A disordered region spans residues 1–23 (MATKKGASSSSNGRDSEAKRLGV).

It belongs to the bacterial ribosomal protein bL27 family.

This chain is Large ribosomal subunit protein bL27, found in Corynebacterium urealyticum (strain ATCC 43042 / DSM 7109).